A 324-amino-acid chain; its full sequence is Beta-ketoacyl-[acyl-carrier-protein] synthase III (324 aa).

Residues Cys114 and His246 contribute to the active site. The interval 247–251 (QANLR) is ACP-binding. Residue Asn276 is part of the active site.

It belongs to the thiolase-like superfamily. FabH family. As to quaternary structure, homodimer.

The protein resides in the cytoplasm. The enzyme catalyses malonyl-[ACP] + acetyl-CoA + H(+) = 3-oxobutanoyl-[ACP] + CO2 + CoA. Its pathway is lipid metabolism; fatty acid biosynthesis. Catalyzes the condensation reaction of fatty acid synthesis by the addition to an acyl acceptor of two carbons from malonyl-ACP. Catalyzes the first condensation reaction which initiates fatty acid synthesis and may therefore play a role in governing the total rate of fatty acid production. Possesses both acetoacetyl-ACP synthase and acetyl transacylase activities. Its substrate specificity determines the biosynthesis of branched-chain and/or straight-chain of fatty acids. This is Beta-ketoacyl-[acyl-carrier-protein] synthase III from Campylobacter jejuni (strain RM1221).